The sequence spans 235 residues: Large ribosomal subunit protein uL4 (235 aa).

The tract at residues 45-75 (RAGTASTKTRGEVSGGGRKPWPQKHTGRARH) is disordered. Basic residues predominate over residues 65-75 (WPQKHTGRARH).

It belongs to the universal ribosomal protein uL4 family. As to quaternary structure, part of the 50S ribosomal subunit.

One of the primary rRNA binding proteins, this protein initially binds near the 5'-end of the 23S rRNA. It is important during the early stages of 50S assembly. It makes multiple contacts with different domains of the 23S rRNA in the assembled 50S subunit and ribosome. Functionally, forms part of the polypeptide exit tunnel. This Thermotoga petrophila (strain ATCC BAA-488 / DSM 13995 / JCM 10881 / RKU-1) protein is Large ribosomal subunit protein uL4.